The following is a 359-amino-acid chain: 4-galactosyl-N-acetylglucosaminide 3-alpha-L-fucosyltransferase FUT6 (359 aa).

Over 1–14 (MDPLGPAKPQWSCR) the chain is Cytoplasmic. The helical; Signal-anchor for type II membrane protein transmembrane segment at 15–34 (CCLTTLLFQLLVAVCFFSYL) threads the bilayer. Residues 35 to 359 (RVSRDDPTVY…QTRSITAWFT (325 aa)) lie on the Lumenal side of the membrane. N-linked (GlcNAc...) asparagine glycosylation is found at Asn-46, Asn-91, Asn-153, and Asn-184. The interval 73-112 (KPTALPRCSEMLPGTADCNITADRKVYPQADAVIVHHREV) is determines site-specific fucosylation.

Belongs to the glycosyltransferase 10 family. As to quaternary structure, homodimer and monomer. Monomer (secreted form). In terms of processing, N-glycosylated. Post-translationally, proteolytic cleavage releases a secreted glycoform of 43 kDa.

It is found in the golgi apparatus. It localises to the golgi stack membrane. Its subcellular location is the secreted. The enzyme catalyses a beta-D-galactosyl-(1-&gt;4)-N-acetyl-beta-D-glucosaminyl derivative + GDP-beta-L-fucose = a beta-D-galactosyl-(1-&gt;4)-[alpha-L-fucosyl-(1-&gt;3)]-N-acetyl-beta-D-glucosaminyl derivative + GDP + H(+). The catalysed reaction is an N-acetyl-alpha-neuraminyl-(2-&gt;3)-beta-D-galactosyl-(1-&gt;4)-N-acetyl-beta-D-glucosaminyl derivative + GDP-beta-L-fucose = an alpha-Neu5Ac-(2-&gt;3)-beta-D-Gal-(1-&gt;4)-[alpha-L-Fuc-(1-&gt;3)]-beta-D-GlcNAc derivative + GDP + H(+). It carries out the reaction an alpha-Neu5Ac-(2-&gt;3)-beta-D-Gal-(1-&gt;4)-beta-D-GlcNAc-(1-&gt;3)-beta-D-Gal-(1-&gt;4)-[alpha-L-Fuc-(1-&gt;3)]-beta-D-GlcNAc derivative + GDP-beta-L-fucose = an alpha-Neu5Ac-(2-&gt;3)-beta-D-Gal-(1-&gt;4)-[alpha-L-Fuc-(1-&gt;3)]-beta-D-GlcNAc-(1-&gt;3)-beta-D-Gal-(1-&gt;4)-[alpha-L-Fuc-(1-&gt;3)]-beta-D-GlcNAc derivative + GDP + H(+). It catalyses the reaction a neolactoside nLc6Cer + GDP-beta-L-fucose = beta-D-Gal-(1-&gt;4)-[alpha-L-Fuc-(1-&gt;3)]-beta-D-GlcNAc-(1-&gt;3)-beta-D-Gal-(1-&gt;4)-beta-D-GlcNAc-(1-&gt;3)-beta-D-Gal-(1-&gt;4)-beta-D-Glc-(1&lt;-&gt;1')-Cer + GDP + H(+). The enzyme catalyses a neolactoside nLc6Cer + GDP-beta-L-fucose = beta-D-galactosyl-(1-&gt;4)-N-acetyl-beta-D-glucosaminyl-(1-&gt;3)-beta-D-galactosyl-(1-&gt;4)-[alpha-L-fucosyl-(1-&gt;3)]-N-acetyl-beta-D-glucosaminyl-(1-&gt;3)-beta-D-galactosyl-(1-&gt;4)-beta-D-glucosyl-(1&lt;-&gt;1')-ceramide + GDP + H(+). The catalysed reaction is a neolactoside VI(3)-alpha-NeuNAc-nLc6Cer + GDP-beta-L-fucose = a neolactoside VI(3)-alpha-NeuAc,V(3)-alphaFuc-nLc6Cer + GDP + H(+). It carries out the reaction beta-D-galactosyl-(1-&gt;4)-N-acetyl-D-glucosamine + GDP-beta-L-fucose = beta-D-galactosyl-(1-&gt;4)-[alpha-L-fucosyl-(1-&gt;3)]-N-acetyl-D-glucosamine + GDP + H(+). It catalyses the reaction N-acetyl-alpha-neuraminosyl-(2-&gt;3)-beta-D-galactosyl-(1-&gt;4)-N-acetyl-beta-D-glucosamine + GDP-beta-L-fucose = N-acetyl-alpha-neuraminosyl-(2-&gt;3)-beta-D-galactosyl-(1-&gt;4)-[alpha-L-fucosyl-(1-&gt;3)]-N-acetyl-beta-D-glucosamine + GDP + H(+). The enzyme catalyses lactose + GDP-beta-L-fucose = beta-D-galactosyl-(1-&gt;4)-[alpha-L-fucosyl-(1-&gt;3)]-D-glucose + GDP + H(+). The catalysed reaction is alpha-L-Fuc-(1-&gt;2)-beta-D-Gal-(1-&gt;4)-D-Glc + GDP-beta-L-fucose = alpha-L-Fuc-(1-&gt;2)-beta-D-Gal-(1-&gt;4)-[alpha-L-Fuc-(1-&gt;3)]-D-Glc + GDP + H(+). It carries out the reaction a beta-D-galactosyl-(1-&gt;4)-N-acetyl-beta-D-6-sulfooxy-glucosaminyl derivative + GDP-beta-L-fucose = a beta-D-galactosyl-(1-&gt;4)-[alpha-L-fucosyl-(1-&gt;3)]-N-acetyl-beta-D-6-sulfooxy-glucosaminyl derivative + GDP + H(+). It functions in the pathway protein modification; protein glycosylation. In terms of biological role, catalyzes the transfer of L-fucose, from a guanosine diphosphate-beta-L-fucose, to the N-acetyl glucosamine (GlcNAc) of a distal alpha2,3 sialylated lactosamine unit of a glycoprotein- or glycolipid-linked sialopolylactosamines chain or of a distal or internal lactosamine unit of a neutral glycoprotein- or glycolipid-linked polylactosamines chain through an alpha-1,3 glycosidic linkage and participates in surface expression of the sialyl Lewis X (sLe(x)), Lewis X (Le(x)) and non sialylated VIM2 determinants. Moreover transfers fucose to H-type 2 (Fucalpha1-2Galbeta1-4GlcNAc) chain acceptor substrates and participates in difucosylated sialyl Lewis x determinants. Also fucosylates a polylactosamine substrate having a 6 sulfate modification at the GlcNAc moiety and gives rise to sialyl and non-sialyl 6-sulfo lewis X. Does not have activity towards type 1 ((Galbeta1-3GlcNAc)) and H-type 1 chain (Fucalpha1-2Galbeta1-3GlcNAc) acceptors substrates. The protein is 4-galactosyl-N-acetylglucosaminide 3-alpha-L-fucosyltransferase FUT6 of Gorilla gorilla gorilla (Western lowland gorilla).